The primary structure comprises 61 residues: MARKALIVKQQKPQKYKTREYNRCKICGRPHAYLRKFGMCRICFRKYAHQGMIPGVKKASW.

Zn(2+) is bound by residues C24, C27, C40, and C43.

Belongs to the universal ribosomal protein uS14 family. Zinc-binding uS14 subfamily. As to quaternary structure, part of the 30S ribosomal subunit. Contacts proteins S3 and S10. Requires Zn(2+) as cofactor.

Functionally, binds 16S rRNA, required for the assembly of 30S particles and may also be responsible for determining the conformation of the 16S rRNA at the A site. The sequence is that of Small ribosomal subunit protein uS14 from Thermoanaerobacter sp. (strain X514).